Here is a 507-residue protein sequence, read N- to C-terminus: Histidine ammonia-lyase (507 aa).

The 5-imidazolinone (Ala-Gly) cross-link spans 141 to 143 (ASG). Position 142 is a 2,3-didehydroalanine (Ser) (serine 142).

It belongs to the PAL/histidase family. In terms of processing, contains an active site 4-methylidene-imidazol-5-one (MIO), which is formed autocatalytically by cyclization and dehydration of residues Ala-Ser-Gly.

It localises to the cytoplasm. It catalyses the reaction L-histidine = trans-urocanate + NH4(+). It participates in amino-acid degradation; L-histidine degradation into L-glutamate; N-formimidoyl-L-glutamate from L-histidine: step 1/3. This chain is Histidine ammonia-lyase, found in Paraburkholderia phytofirmans (strain DSM 17436 / LMG 22146 / PsJN) (Burkholderia phytofirmans).